The chain runs to 314 residues: tRNA(Ile)-lysidine synthase, chloroplastic (314 aa).

Position 31–36 (31–36 (SGGQDS)) interacts with ATP.

It belongs to the tRNA(Ile)-lysidine synthase family.

It is found in the plastid. It localises to the chloroplast. The enzyme catalyses cytidine(34) in tRNA(Ile2) + L-lysine + ATP = lysidine(34) in tRNA(Ile2) + AMP + diphosphate + H(+). In terms of biological role, ligates lysine onto the cytidine present at position 34 of the AUA codon-specific tRNA(Ile) that contains the anticodon CAU, in an ATP-dependent manner. Cytidine is converted to lysidine, thus changing the amino acid specificity of the tRNA from methionine to isoleucine. The protein is tRNA(Ile)-lysidine synthase, chloroplastic of Cyanidium caldarium (Red alga).